The sequence spans 576 residues: MRASTYHLNTLKEAPAEAEVASHRLMTRAGMIRKLAGGIYTYMPLGLKVIRKIEAIVRAEMDAAGAIELLMPVVQPAELWQESGRWEQYGAELLRIKDRHQRDFVLQPTSEEVITDIARNEIHSYRQLPLNFYHIQTKFRDERRPRFGLMRGREFTMKDAYSFDRDEAGAQQSYDKMYDAYMRIFERLGLQFRAVAADTGSIGGSRSHEFQVIADTGEDLLVYNPDSQYAANIELAEAPALLAERAAATQPLEAVPTPGAAKCADVAKLLGLPLERTLKSIVLATEPEPGKVQVWLLLLRGDHELNEIKAGKLPGLAGFRFATEDEIVAHFGCKPGYLGPIGTALPVRVVADRTVANMADFVCGANREDFHYQGANWGRDLPEPELVADLRNVVEGDPAPDGAGRLAIQRGIEVGHVFFLGTKYSEALKATFLDETGKPALLQMGCYGIGITRIAGAAIEQNHDERGIIWPRAIAPFEVVICPVGWGKNETVRNESVKLYDALRARGVDVILDDRDARPGVMFAEWELIGVPLRVTVGERGLNDGVVELQARRESTAAKIPAGSALEQVLAKLETL.

The protein belongs to the class-II aminoacyl-tRNA synthetase family. ProS type 1 subfamily. As to quaternary structure, homodimer.

The protein resides in the cytoplasm. The catalysed reaction is tRNA(Pro) + L-proline + ATP = L-prolyl-tRNA(Pro) + AMP + diphosphate. Its function is as follows. Catalyzes the attachment of proline to tRNA(Pro) in a two-step reaction: proline is first activated by ATP to form Pro-AMP and then transferred to the acceptor end of tRNA(Pro). As ProRS can inadvertently accommodate and process non-cognate amino acids such as alanine and cysteine, to avoid such errors it has two additional distinct editing activities against alanine. One activity is designated as 'pretransfer' editing and involves the tRNA(Pro)-independent hydrolysis of activated Ala-AMP. The other activity is designated 'posttransfer' editing and involves deacylation of mischarged Ala-tRNA(Pro). The misacylated Cys-tRNA(Pro) is not edited by ProRS. This Bordetella petrii (strain ATCC BAA-461 / DSM 12804 / CCUG 43448) protein is Proline--tRNA ligase.